A 492-amino-acid chain; its full sequence is V-type proton ATPase subunit B 2 (492 aa).

This sequence belongs to the ATPase alpha/beta chains family. V-ATPase is a heteromultimeric enzyme composed of a peripheral catalytic V1 complex (main components: subunits A, B, C, D, E, and F) attached to an integral membrane V0 proton pore complex (main component: the proteolipid protein).

In terms of biological role, non-catalytic subunit of the peripheral V1 complex of vacuolar ATPase. V-ATPase is responsible for acidifying a variety of intracellular compartments in eukaryotic cells. This chain is V-type proton ATPase subunit B 2, found in Acetabularia acetabulum (Mermaid's wine glass).